A 213-amino-acid polypeptide reads, in one-letter code: Thymidylate kinase (213 aa).

ATP is bound at residue 10-17; sequence GLEGAGKT.

It belongs to the thymidylate kinase family.

The catalysed reaction is dTMP + ATP = dTDP + ADP. Its function is as follows. Phosphorylation of dTMP to form dTDP in both de novo and salvage pathways of dTTP synthesis. The chain is Thymidylate kinase from Salmonella choleraesuis (strain SC-B67).